A 220-amino-acid chain; its full sequence is MSSFSKEARQVHEALVKHGLENPFNMDPENGLLDAATRRSHIEKHITQIMELLNLDLRDDSLSKTPSRIASMYVDEIFLGLDYAHFPEITLIQNKMQVDEMITVHDISLSSTCEHHFASIDGKATVAYIPKDYIIGLSKINRVVQFFSQRPQVQERLTQQIILALQTLLATENVAVSIDATHYCVKARGICDRSSVTRTTSLRGLFKSSQNTRQEFLHIC.

3 residues coordinate Zn(2+): Cys113, His116, and Cys184.

It belongs to the GTP cyclohydrolase I family. Homomer.

The catalysed reaction is GTP + H2O = 7,8-dihydroneopterin 3'-triphosphate + formate + H(+). Its pathway is cofactor biosynthesis; 7,8-dihydroneopterin triphosphate biosynthesis; 7,8-dihydroneopterin triphosphate from GTP: step 1/1. This Hamiltonella defensa subsp. Acyrthosiphon pisum (strain 5AT) protein is GTP cyclohydrolase 1.